Reading from the N-terminus, the 576-residue chain is Putative diflavin flavoprotein A 1 (576 aa).

The interval 48–240 (RNGTTYNSFL…LAIKTVATGH (193 aa)) is zinc metallo-hydrolase. Fe cation is bound by residues histidine 97, glutamate 99, aspartate 101, histidine 164, aspartate 183, and histidine 240. The Flavodoxin-like domain maps to 269 to 431 (VALFYAEDYG…DLEKALGRIS (163 aa)). The tract at residues 432-576 (TGLYIITTKK…VHHRKVGNHY (145 aa)) is flavodoxin-reductase-like.

It in the N-terminal section; belongs to the zinc metallo-hydrolase group 3 family. This sequence in the C-terminal section; belongs to the flavodoxin reductase family. Fe cation is required as a cofactor.

Its function is as follows. Mediates electron transfer from NADH to oxygen, reducing it to water. This modular protein has 3 redox cofactors, in other organisms the same activity requires 2 or 3 proteins. In Nostoc sp. (strain PCC 7120 / SAG 25.82 / UTEX 2576), this protein is Putative diflavin flavoprotein A 1 (dfa1).